The sequence spans 30 residues: Cycloviolacin-O10 (30 aa).

Positions 1 to 30 (GIPCGESCVYIPCLTSAVGCSCKSKVCYRN) form a cross-link, cyclopeptide (Gly-Asn). Intrachain disulfides connect cysteine 4–cysteine 20, cysteine 8–cysteine 22, and cysteine 13–cysteine 27.

This is a cyclic peptide. As to expression, expressed in petals and roots but not in leaves, petioles and runners (at protein level).

Functionally, probably participates in a plant defense mechanism. This chain is Cycloviolacin-O10, found in Viola odorata (Sweet violet).